The following is a 313-amino-acid chain: B3 domain-containing protein At2g31720 (313 aa).

Residues 80–110 (KNQDPEQNPNRVASSPSSCHLESKRPQKVVS) are disordered. The span at 84–99 (PEQNPNRVASSPSSCH) shows a compositional bias: polar residues. Positions 169-267 (WKQILDMDFL…MLFFAFVLSD (99 aa)) form a DNA-binding region, TF-B3.

The protein localises to the nucleus. The sequence is that of B3 domain-containing protein At2g31720 (ARF70) from Arabidopsis thaliana (Mouse-ear cress).